Consider the following 313-residue polypeptide: UDP-N-acetylenolpyruvoylglucosamine reductase (313 aa).

The FAD-binding PCMH-type domain occupies 31 to 207 (VGGPADALVA…TGVDLGLGFD (177 aa)). Residue arginine 180 is part of the active site. Cysteine 236 (proton donor) is an active-site residue. The active site involves glutamate 307.

This sequence belongs to the MurB family. Requires FAD as cofactor.

The protein localises to the cytoplasm. The enzyme catalyses UDP-N-acetyl-alpha-D-muramate + NADP(+) = UDP-N-acetyl-3-O-(1-carboxyvinyl)-alpha-D-glucosamine + NADPH + H(+). Its pathway is cell wall biogenesis; peptidoglycan biosynthesis. Functionally, cell wall formation. This Desulfosudis oleivorans (strain DSM 6200 / JCM 39069 / Hxd3) (Desulfococcus oleovorans) protein is UDP-N-acetylenolpyruvoylglucosamine reductase.